Reading from the N-terminus, the 399-residue chain is Acetate kinase (399 aa).

N10 is a Mg(2+) binding site. K17 is a binding site for ATP. R91 is a binding site for substrate. D148 functions as the Proton donor/acceptor in the catalytic mechanism. Residues 208-212, 283-285, and 331-335 contribute to the ATP site; these read HLGNG, DCR, and GIGEN. A Mg(2+)-binding site is contributed by E385.

Belongs to the acetokinase family. As to quaternary structure, homodimer. The cofactor is Mg(2+). Requires Mn(2+) as cofactor.

The protein localises to the cytoplasm. The enzyme catalyses acetate + ATP = acetyl phosphate + ADP. It participates in metabolic intermediate biosynthesis; acetyl-CoA biosynthesis; acetyl-CoA from acetate: step 1/2. Functionally, catalyzes the formation of acetyl phosphate from acetate and ATP. Can also catalyze the reverse reaction. The chain is Acetate kinase from Shewanella baltica (strain OS223).